The chain runs to 86 residues: Exodeoxyribonuclease 7 small subunit (86 aa).

Residues 1 to 27 (MQDELFETEKIPPKNTKNAKNAPKKSF) form a disordered region.

This sequence belongs to the XseB family. Heterooligomer composed of large and small subunits.

It localises to the cytoplasm. The catalysed reaction is Exonucleolytic cleavage in either 5'- to 3'- or 3'- to 5'-direction to yield nucleoside 5'-phosphates.. Functionally, bidirectionally degrades single-stranded DNA into large acid-insoluble oligonucleotides, which are then degraded further into small acid-soluble oligonucleotides. The chain is Exodeoxyribonuclease 7 small subunit from Helicobacter pylori (strain G27).